Reading from the N-terminus, the 88-residue chain is Putative membrane protein insertion efficiency factor (88 aa).

The segment at 68–88 (VPPKKDKNADSEHSCKVHHHH) is disordered. Residues 69–82 (PPKKDKNADSEHSC) show a composition bias toward basic and acidic residues.

This sequence belongs to the UPF0161 family.

It localises to the cell membrane. In terms of biological role, could be involved in insertion of integral membrane proteins into the membrane. This is Putative membrane protein insertion efficiency factor from Listeria monocytogenes serovar 1/2a (strain ATCC BAA-679 / EGD-e).